The following is a 245-amino-acid chain: 1-(5-phosphoribosyl)-5-[(5-phosphoribosylamino)methylideneamino] imidazole-4-carboxamide isomerase (245 aa).

Residue Asp-8 is the Proton acceptor of the active site. The Proton donor role is filled by Asp-130.

It belongs to the HisA/HisF family.

It localises to the cytoplasm. It carries out the reaction 1-(5-phospho-beta-D-ribosyl)-5-[(5-phospho-beta-D-ribosylamino)methylideneamino]imidazole-4-carboxamide = 5-[(5-phospho-1-deoxy-D-ribulos-1-ylimino)methylamino]-1-(5-phospho-beta-D-ribosyl)imidazole-4-carboxamide. The protein operates within amino-acid biosynthesis; L-histidine biosynthesis; L-histidine from 5-phospho-alpha-D-ribose 1-diphosphate: step 4/9. This Pseudomonas putida (strain W619) protein is 1-(5-phosphoribosyl)-5-[(5-phosphoribosylamino)methylideneamino] imidazole-4-carboxamide isomerase.